A 506-amino-acid polypeptide reads, in one-letter code: Cysteine--tRNA ligase (506 aa).

C34 serves as a coordination point for Zn(2+). Residues 36–46 carry the 'HIGH' region motif; the sequence is PTVYDFAHIGN. The Zn(2+) site is built by C230, H269, and E273. The 'KMSKS' region signature appears at 302-306; it reads KMSKS. K305 lines the ATP pocket.

The protein belongs to the class-I aminoacyl-tRNA synthetase family. In terms of assembly, monomer. The cofactor is Zn(2+).

Its subcellular location is the cytoplasm. It carries out the reaction tRNA(Cys) + L-cysteine + ATP = L-cysteinyl-tRNA(Cys) + AMP + diphosphate. The sequence is that of Cysteine--tRNA ligase from Brucella abortus (strain S19).